The following is a 202-amino-acid chain: Transmembrane 4 L6 family member 1 (202 aa).

At 1-9 (MCYVKCARY) the chain is on the cytoplasmic side. A helical transmembrane segment spans residues 10–30 (IGYSLVWAAVFCIVANALLYF). Over 31–49 (PNGETKYATEDHLSRFVWY) the chain is Extracellular. Residues 50 to 70 (FAGIVGGGLLMLLPAFVFIGM) form a helical membrane-spanning segment. Residues 71–93 (DEEDCCGCCGYENYGKRCSMLSS) are Cytoplasmic-facing. Residues 94-114 (VLAALIGIVGSAYCVIVASLG) form a helical membrane-spanning segment. At 115–161 (LAEGPKCSDAHGVWNYTFASTEGQYLLNSSMWSKCYEPKHIVEWHVT) the chain is on the extracellular side. Asn129 and Asn142 each carry an N-linked (GlcNAc...) asparagine glycan. The helical transmembrane segment at 162–182 (LFSILLAFAAVEFILCLIQVI) threads the bilayer. Residues 183–202 (NGMLGGLCGYCCSRQQQYNC) lie on the Cytoplasmic side of the membrane.

It belongs to the L6 tetraspanin family. As to quaternary structure, present in high molecular weight complexes in tumor cells. Interacts with SDCBP2. As to expression, highly expressed in skin and lung. Moderately expressed in lymph nodes and kidneys. Also present in thymic stroma and fibroblasts.

It is found in the membrane. This chain is Transmembrane 4 L6 family member 1 (Tm4sf1), found in Mus musculus (Mouse).